The sequence spans 565 residues: Anaphase-promoting complex subunit 7 (565 aa).

TPR repeat units lie at residues 101–134 (EIEVKYKMAECYTMLKLDKDAIAVLDGIPSRQRT), 169–202 (LDAILGLLSLSVKGAEVASMTMNVIQTVPNLDWL), 203–236 (SVWIKAYAFVHTGDNSRAINTICSLEKKSLLRDN), 237–270 (VDLLGSLADLYFRAGDSKNSVLKFEQAQMLDPYL), 339–372 (VQALLLKGAALRNMGRVQEAIIHFREAIRLAPCR), 373–406 (LDCYEGLIECYLASNSIREAMVMANNVYKTLGAN), 407–439 (AQTLTLLATVCLEDPVTQEKAKTLLDKALAQRP), 442–474 (VKAVVKKAELLSREQKYEDGIALLRNALANQSD), 475–508 (CVLHRILGDFLVAVNEYQEAMDQYSIALSLDPND), and 509–531 (QKSLEGMQKMEKEESPTDATQEE). Lys229 carries the N6-acetyllysine modification. Residues 513 to 523 (EGMQKMEKEES) show a composition bias toward basic and acidic residues. A disordered region spans residues 513–565 (EGMQKMEKEESPTDATQEEDVDDMEGSGEEGDLEGSDSEAAQWADQEQWFGMQ). The segment covering 528 to 549 (TQEEDVDDMEGSGEEGDLEGSD) has biased composition (acidic residues).

It belongs to the APC7 family. V-shaped homodimer. The mammalian APC/C is composed at least of 14 distinct subunits ANAPC1, ANAPC2, CDC27/APC3, ANAPC4, ANAPC5, CDC16/APC6, ANAPC7, CDC23/APC8, ANAPC10, ANAPC11, CDC26/APC12, ANAPC13, ANAPC15 and ANAPC16 that assemble into a complex of at least 19 chains with a combined molecular mass of around 1.2 MDa; APC/C interacts with FZR1 and FBXO5.

It localises to the cytoplasm. The protein resides in the cytoskeleton. The protein localises to the nucleus. It is found in the spindle. Its pathway is protein modification; protein ubiquitination. Its function is as follows. Component of the anaphase promoting complex/cyclosome (APC/C), a cell cycle-regulated E3 ubiquitin ligase that controls progression through mitosis and the G1 phase of the cell cycle. The APC/C complex acts by mediating ubiquitination and subsequent degradation of target proteins: it mainly mediates the formation of 'Lys-11'-linked polyubiquitin chains and, to a lower extent, the formation of 'Lys-48'- and 'Lys-63'-linked polyubiquitin chains. The APC/C complex catalyzes assembly of branched 'Lys-11'-/'Lys-48'-linked branched ubiquitin chains on target proteins. APC7 is not required for the assembly of the APC/C complex, but has an enzyme-substrate adapter activity mediating the processive ubiquitination of specific substrates. Involved in brain development through the specific ubiquitination and clearance of MKI67 from constitutive heterochromatin after neuronal progenitors exit mitosis. This is Anaphase-promoting complex subunit 7 (Anapc7) from Mus musculus (Mouse).